The primary structure comprises 97 residues: Down syndrome critical region protein 8 (97 aa).

As to expression, expressed in numerous tissues; not found in breast, heart, small intestine and liver. Isoform 1: Predominantly expressed in the testis. Isoform 3: Predominantly expressed in the testis, at lower level in the placenta, during malignant progression of melanocytic tumors and in several tumors of varying origins. Isoform 4: Predominantly expressed in the testis, at lower level in the placenta, during malignant progression of melanocytic tumors and in several tumors of varying origins. Isoform 5: Predominantly expressed in the testis. Isoform 6: Predominantly expressed in the testis.

In Homo sapiens (Human), this protein is Down syndrome critical region protein 8.